The primary structure comprises 450 residues: Tryptophan dimethylallyltransferase 2 (450 aa).

Residues 80 to 81 and Glu89 each bind L-tryptophan; that span reads IL. The substrate site is built by Arg100, Lys186, and Tyr188. The L-tryptophan site is built by Tyr190 and Arg251. Arg264, Lys266, Tyr268, Gln350, Tyr352, Tyr416, and Tyr420 together coordinate substrate.

Belongs to the tryptophan dimethylallyltransferase family. As to quaternary structure, homodimer.

It catalyses the reaction L-tryptophan + dimethylallyl diphosphate = 4-(3-methylbut-2-enyl)-L-tryptophan + diphosphate. The protein operates within alkaloid biosynthesis; ergot alkaloid biosynthesis. Catalyzes the first step of ergot alkaloid biosynthesis. Ergot alkaloids, which are produced by endophyte fungi, can enhance plant host fitness, but also cause livestock toxicosis to host plants. This Epichloe coenophiala (Tall fescue endophyte fungus) protein is Tryptophan dimethylallyltransferase 2 (dmaW2).